Consider the following 299-residue polypeptide: GTPase Era (299 aa).

The 169-residue stretch at 9-177 folds into the Era-type G domain; the sequence is RSGSVAVIGR…VGDLLKLVPE (169 aa). The segment at 17–24 is G1; that stretch reads GRPNVGKS. 17–24 lines the GTP pocket; that stretch reads GRPNVGKS. The segment at 43–47 is G2; sequence QTTRH. Positions 64–67 are G3; that stretch reads DTPG. GTP-binding positions include 64–68 and 126–129; these read DTPGL and NKVD. The tract at residues 126–129 is G4; the sequence is NKVD. Residues 156-158 form a G5 region; sequence VSA. Residues 200 to 284 form the KH type-2 domain; the sequence is VREQLMRQLG…FLETWVRVRE (85 aa).

This sequence belongs to the TRAFAC class TrmE-Era-EngA-EngB-Septin-like GTPase superfamily. Era GTPase family. Monomer.

The protein localises to the cytoplasm. It localises to the cell inner membrane. Functionally, an essential GTPase that binds both GDP and GTP, with rapid nucleotide exchange. Plays a role in 16S rRNA processing and 30S ribosomal subunit biogenesis and possibly also in cell cycle regulation and energy metabolism. The protein is GTPase Era of Xanthomonas oryzae pv. oryzae (strain MAFF 311018).